The sequence spans 252 residues: DNA repair protein RecO (252 aa).

The protein belongs to the RecO family.

In terms of biological role, involved in DNA repair and RecF pathway recombination. This is DNA repair protein RecO from Rhodospirillum rubrum (strain ATCC 11170 / ATH 1.1.1 / DSM 467 / LMG 4362 / NCIMB 8255 / S1).